A 424-amino-acid polypeptide reads, in one-letter code: Geranylgeranyl pyrophosphate synthase D (424 aa).

The segment at 42–73 (PSATWPSVPKVHKRNRSTSLSDQQTAKKAHAN) is disordered. Positions 58 to 67 (STSLSDQQTA) are enriched in polar residues. The isopentenyl diphosphate site is built by K147, R150, and H179. D186 and D190 together coordinate Mg(2+). R195 provides a ligand contact to dimethylallyl diphosphate. R196 is a binding site for isopentenyl diphosphate. Positions 274, 275, 311, 328, and 338 each coordinate dimethylallyl diphosphate.

It belongs to the FPP/GGPP synthase family. Requires Mg(2+) as cofactor.

It is found in the cytoplasm. The catalysed reaction is isopentenyl diphosphate + dimethylallyl diphosphate = (2E)-geranyl diphosphate + diphosphate. It catalyses the reaction isopentenyl diphosphate + (2E)-geranyl diphosphate = (2E,6E)-farnesyl diphosphate + diphosphate. The enzyme catalyses isopentenyl diphosphate + (2E,6E)-farnesyl diphosphate = (2E,6E,10E)-geranylgeranyl diphosphate + diphosphate. The protein operates within isoprenoid biosynthesis; farnesyl diphosphate biosynthesis; farnesyl diphosphate from geranyl diphosphate and isopentenyl diphosphate: step 1/1. It participates in isoprenoid biosynthesis; geranyl diphosphate biosynthesis; geranyl diphosphate from dimethylallyl diphosphate and isopentenyl diphosphate: step 1/1. It functions in the pathway isoprenoid biosynthesis; geranylgeranyl diphosphate biosynthesis; geranylgeranyl diphosphate from farnesyl diphosphate and isopentenyl diphosphate: step 1/1. Catalyzes the trans-addition of the 3 molecules of isopentenyl diphosphate (IPP) onto dimethylallyl diphosphate (DMAPP) to form geranylgeranyl pyrophosphate (GGDP). The polypeptide is Geranylgeranyl pyrophosphate synthase D (GGS-D) (Phomopsis amygdali (Fusicoccum amygdali)).